The sequence spans 288 residues: Phosphopantetheinyl transferase (288 aa).

CoA is bound by residues Arg60, 99–104, and 118–121; these read RTEMGK and NLSH. Mg(2+) is bound by residues Asp139 and Glu196. Position 196–200 (196–200) interacts with CoA; sequence EAYLK.

It belongs to the P-Pant transferase superfamily. AcpS family. As to quaternary structure, monomer.

The protein localises to the cytoplasm. The protein resides in the cytosol. It catalyses the reaction apo-[ACP] + CoA = holo-[ACP] + adenosine 3',5'-bisphosphate + H(+). It functions in the pathway lipid metabolism; fatty acid biosynthesis. Phosphopantetheinyl transferase that is essential for attaching phosphopantetheine to ACP domains of the polyunsaturated fatty acid (PUFA) synthase converting the inactive apo-synthase to the active holo-synthase. The protein is Phosphopantetheinyl transferase of Thraustochytrium sp. (strain ATCC 26185 / S-3).